The following is a 212-amino-acid chain: Regulatory protein RecX (212 aa).

It belongs to the RecX family.

The protein localises to the cytoplasm. Its function is as follows. Modulates RecA activity. The polypeptide is Regulatory protein RecX (Clostridium botulinum (strain Alaska E43 / Type E3)).